Consider the following 328-residue polypeptide: MSVTAAADIQLTASGRLRHFLTIEGLSRELLTRIMDTAESFAGVTAQNVKKVPLLRGKTVVNLFFENSTRTRTTFELAAKRLSADVLNINIATSATSKGESLLDTIRNLEAMHVDMFVVRHAQSGAAHFIARHVAPHISVLNAGDGRHAHPTQAMLDVFTIRRAKGGFAGLKVAIVGDILHSRVARSEIWALNTLGVDEVRVVAPKTLLPAHVEALGVVPYHDLNEGLRDVDVVIMLRLQLERMGSAFIPSEHEYFQRFGLTEKRLEKARPDVIVMHPGPINRGIEIDSAIADGPRSVILQQVTHGIAVRMAVMSMAMHAGPDLEVPV.

Carbamoyl phosphate contacts are provided by Arg70 and Thr71. Residue Lys98 participates in L-aspartate binding. 3 residues coordinate carbamoyl phosphate: Arg120, His150, and Gln153. Positions 183 and 238 each coordinate L-aspartate. Residues Gly279 and Pro280 each contribute to the carbamoyl phosphate site.

It belongs to the aspartate/ornithine carbamoyltransferase superfamily. ATCase family. Heterododecamer (2C3:3R2) of six catalytic PyrB chains organized as two trimers (C3), and six regulatory PyrI chains organized as three dimers (R2).

It catalyses the reaction carbamoyl phosphate + L-aspartate = N-carbamoyl-L-aspartate + phosphate + H(+). It participates in pyrimidine metabolism; UMP biosynthesis via de novo pathway; (S)-dihydroorotate from bicarbonate: step 2/3. Functionally, catalyzes the condensation of carbamoyl phosphate and aspartate to form carbamoyl aspartate and inorganic phosphate, the committed step in the de novo pyrimidine nucleotide biosynthesis pathway. The protein is Aspartate carbamoyltransferase catalytic subunit of Methylococcus capsulatus (strain ATCC 33009 / NCIMB 11132 / Bath).